Here is a 66-residue protein sequence, read N- to C-terminus: Large ribosomal subunit protein bL35 (66 aa).

Residues 1 to 16 (MPKMKTHKGSAKRFKK) show a composition bias toward basic residues. Positions 1-24 (MPKMKTHKGSAKRFKKTGTGQLKR) are disordered.

It belongs to the bacterial ribosomal protein bL35 family.

In Anoxybacillus flavithermus (strain DSM 21510 / WK1), this protein is Large ribosomal subunit protein bL35.